Consider the following 345-residue polypeptide: Biotin synthase (345 aa).

A Radical SAM core domain is found at 66–291 (PEVEVEGIIS…RTMLRFAGGR (226 aa)). [4Fe-4S] cluster-binding residues include C81, C85, and C88. C124, C157, C216, and R286 together coordinate [2Fe-2S] cluster.

It belongs to the radical SAM superfamily. Biotin synthase family. As to quaternary structure, homodimer. [4Fe-4S] cluster serves as cofactor. [2Fe-2S] cluster is required as a cofactor.

The catalysed reaction is (4R,5S)-dethiobiotin + (sulfur carrier)-SH + 2 reduced [2Fe-2S]-[ferredoxin] + 2 S-adenosyl-L-methionine = (sulfur carrier)-H + biotin + 2 5'-deoxyadenosine + 2 L-methionine + 2 oxidized [2Fe-2S]-[ferredoxin]. It participates in cofactor biosynthesis; biotin biosynthesis; biotin from 7,8-diaminononanoate: step 2/2. In terms of biological role, catalyzes the conversion of dethiobiotin (DTB) to biotin by the insertion of a sulfur atom into dethiobiotin via a radical-based mechanism. This is Biotin synthase from Mycobacterium avium (strain 104).